Consider the following 413-residue polypeptide: Putative competence-damage inducible protein (413 aa).

This sequence belongs to the CinA family.

The protein is Putative competence-damage inducible protein of Thermoanaerobacter pseudethanolicus (strain ATCC 33223 / 39E) (Clostridium thermohydrosulfuricum).